We begin with the raw amino-acid sequence, 553 residues long: Transcription factor MYB65 (553 aa).

The tract at residues 1–44 (MSYTTATADSDDGMHSSIHNESPAPDSISNGCRSRGKRSVLKKG) is disordered. 2 HTH myb-type domains span residues 38–90 (RSVL…ANHL) and 91–145 (RPNL…KRRQ). 2 consecutive DNA-binding regions (H-T-H motif) follow at residues 66 to 90 (WNAV…ANHL) and 118 to 141 (WAQM…NTRI).

As to expression, mostly expressed in roots (e.g. root tips), stems, pollen, shoot apices, flowers and floral shoot tips, and, to a lower extent, in leaves and siliques.

Its subcellular location is the nucleus. Transcriptional activator of alpha-amylase expression that binds to 5'-CAACTGTC-3' motif in target gene promoter. In vegetative tissues, inhibits growth by reducing cell proliferation. Promotes the expression of aleurone-related genes (e.g. CP1, CP, GASA1, BXL1 and BXL2) in seeds. Together with MYB33 and MYB101, promotes the programmed cell death (PCD) the vacuolation of protein storage vacuoles (PSVs) in the aleurone layers during seed germination. Together with MYB33, facilitates anther and tapetum development. This chain is Transcription factor MYB65, found in Arabidopsis thaliana (Mouse-ear cress).